We begin with the raw amino-acid sequence, 1066 residues long: Ubiquitin conjugation factor E4 A (1066 aa).

A disordered region spans residues 35–57; that stretch reads QLKQQSDELPASPDDSDNSVSES. Lys-386 bears the N6-acetyllysine mark. Residues 987-1061 form the U-box domain; that stretch reads DACDEFLDPI…QRWLAERKQQ (75 aa).

It belongs to the ubiquitin conjugation factor E4 family.

Its subcellular location is the cytoplasm. It catalyses the reaction S-ubiquitinyl-[E2 ubiquitin-conjugating enzyme]-L-cysteine + [acceptor protein]-L-lysine = [E2 ubiquitin-conjugating enzyme]-L-cysteine + N(6)-ubiquitinyl-[acceptor protein]-L-lysine.. Its pathway is protein modification; protein ubiquitination. Ubiquitin-protein ligase that probably functions as an E3 ligase in conjunction with specific E1 and E2 ligases. May also function as an E4 ligase mediating the assembly of polyubiquitin chains on substrates ubiquitinated by another E3 ubiquitin ligase. Mediates 'Lys-48'-linked polyubiquitination of substrates. The sequence is that of Ubiquitin conjugation factor E4 A from Rattus norvegicus (Rat).